We begin with the raw amino-acid sequence, 492 residues long: Catalase isozyme 2 (492 aa).

Active-site residues include histidine 65 and asparagine 138. Position 347 (tyrosine 347) interacts with heme.

It belongs to the catalase family. In terms of assembly, homotetramer. The cofactor is heme. As to expression, high levels in green cotyledons, mature leaf, stem and green hypocotyl.

Its subcellular location is the peroxisome. The enzyme catalyses 2 H2O2 = O2 + 2 H2O. Occurs in almost all aerobically respiring organisms and serves to protect cells from the toxic effects of hydrogen peroxide. The polypeptide is Catalase isozyme 2 (CAT2) (Cucurbita pepo (Vegetable marrow)).